A 195-amino-acid polypeptide reads, in one-letter code: Ras-related protein rac-2 (195 aa).

10 to 17 (GDGAVGKT) contacts GTP. Residues 32 to 40 (YILTVFDTY) carry the Effector region motif. GTP is bound by residues 57-61 (DTAGQ) and 115-118 (TKAD). The interval 176-195 (GLTPPQTPQTRAKKSNCTVL) is disordered. C192 is subject to Cysteine methyl ester. A lipid anchor (S-geranylgeranyl cysteine) is attached at C192. Residues 193 to 195 (TVL) constitute a propeptide, removed in mature form.

Belongs to the small GTPase superfamily. Rho family.

The protein resides in the cell membrane. During gonad morphogenesis, plays a role in distal tip cell (DTC)-mediated guidance of gonad elongation. This is Ras-related protein rac-2 (rac-2) from Caenorhabditis elegans.